The following is a 446-amino-acid chain: Tubulin beta-1 chain (446 aa).

GTP is bound by residues Gln-11, Glu-69, Ser-138, Gly-142, Thr-143, Gly-144, Asn-204, and Asn-226. Position 69 (Glu-69) interacts with Mg(2+). The interval 422–446 (YQQYQDATADEEGEYEDEEEGDLQD) is disordered. The span at 429–446 (TADEEGEYEDEEEGDLQD) shows a compositional bias: acidic residues.

Belongs to the tubulin family. Dimer of alpha and beta chains. A typical microtubule is a hollow water-filled tube with an outer diameter of 25 nm and an inner diameter of 15 nM. Alpha-beta heterodimers associate head-to-tail to form protofilaments running lengthwise along the microtubule wall with the beta-tubulin subunit facing the microtubule plus end conferring a structural polarity. Microtubules usually have 13 protofilaments but different protofilament numbers can be found in some organisms and specialized cells. It depends on Mg(2+) as a cofactor. Found in areas of rapidly dividing tissues.

The protein localises to the cytoplasm. The protein resides in the cytoskeleton. Its function is as follows. Tubulin is the major constituent of microtubules, a cylinder consisting of laterally associated linear protofilaments composed of alpha- and beta-tubulin heterodimers. Microtubules grow by the addition of GTP-tubulin dimers to the microtubule end, where a stabilizing cap forms. Below the cap, tubulin dimers are in GDP-bound state, owing to GTPase activity of alpha-tubulin. The chain is Tubulin beta-1 chain (TUBB1) from Zea mays (Maize).